The chain runs to 1040 residues: Multidrug resistance protein MdtB (1040 aa).

The next 12 helical transmembrane spans lie at 16–36 (FIMR…AGII), 342–362 (DTQF…YLFL), 369–389 (IIPG…MVFL), 396–416 (LTLM…IVVI), 440–460 (IGFT…PLLF), 472–492 (FAVT…TLTP), 537–557 (WLTL…WVFI), 863–883 (LGST…VLGV), 888–908 (FIHP…ALLA), 911–931 (LAGS…IGIV), 968–988 (ILMT…STGV), and 998–1018 (IGMV…TPVI).

It belongs to the resistance-nodulation-cell division (RND) (TC 2.A.6) family. MdtB subfamily. As to quaternary structure, part of a tripartite efflux system composed of MdtA, MdtB and MdtC. MdtB forms a heteromultimer with MdtC.

The protein localises to the cell inner membrane. The polypeptide is Multidrug resistance protein MdtB (Klebsiella pneumoniae (strain 342)).